A 419-amino-acid polypeptide reads, in one-letter code: Vacuolar aspartic protease (419 aa).

The first 22 residues, 1–22 (MQLSLSALTTVALALTSSLVDA), serve as a signal peptide directing secretion. The region spanning 104–415 (YFTEIQIGTP…DLDKNAVGLA (312 aa)) is the Peptidase A1 domain. Residue Asp-122 is part of the active site. A disulfide bridge links Cys-135 with Cys-140. A glycan (N-linked (GlcNAc...) asparagine) is linked at Asn-157. The active site involves Asp-307. A disulfide bridge links Cys-341 with Cys-374. Residue Asn-358 is glycosylated (N-linked (GlcNAc...) asparagine). Residues 417-419 (TKV) carry the Microbody targeting signal motif.

Belongs to the peptidase A1 family.

The protein localises to the vacuole. The protein is Vacuolar aspartic protease (APR1) of Candida albicans (Yeast).